The primary structure comprises 269 residues: MTILFLTMVISYFSCMRAAPLRDAPGMRGHWTEGYLGAAATAPRGHGTPQSGGGPGQREELPSLTDTFEQVIEELLEVEGEAAHVGQGADKSQGGGGPSPVATAEANDVDLYNSRVMISNQVPLEPPLLFLLEEYKNYLDAANMSMRVRRHSDPSRRGELSVCDSISQWVTAVDKKTAIDMSGQTVTVMEKVPVPNGQLKQYFYETKCNPMGYTKDGCRGIDKRHYTSQCRTTQSYVRALTMDSKKKIGWRFIRIDTSCVCTLTIKRGR.

The N-terminal stretch at Met1–Ala18 is a signal peptide. The propeptide occupies Ala19 to Arg150. 2 disordered regions span residues Ala39–Leu61 and Ala82–Ala104. A glycan (N-linked (GlcNAc...) asparagine) is linked at Asn143. Cystine bridges form between Cys163–Cys230, Cys208–Cys259, and Cys218–Cys261.

This sequence belongs to the NGF-beta family.

Its function is as follows. BDNF promotes the survival of neuronal populations that are all located either in the central nervous system or directly connected to it. The sequence is that of Neurotrophic factor BDNF precursor form (bdnf) from Xiphophorus maculatus (Southern platyfish).